The following is a 393-amino-acid chain: 6-hydroxy-3-succinoylpyridine 3-monooxygenase HspB (393 aa).

Residues 6 to 35 (RVIIVGGGPVGLLTALGLAKAGTNVVVLEA) and 277 to 287 (MRNGRVILIGD) each bind FAD.

Belongs to the PheA/TfdB FAD monooxygenase family. Homodimer. FAD serves as cofactor.

It catalyses the reaction 4-(6-hydroxypyridin-3-yl)-4-oxobutanoate + 2 NADH + O2 + 2 H(+) = 2,5-dihydroxypyridine + succinate semialdehyde + 2 NAD(+) + H2O. It participates in alkaloid degradation; nicotine degradation. Its activity is regulated as follows. Inhibited by Cu(2+) and Zn(2+). Its function is as follows. Involved in the nicotine degradation. Catalyzes the cleavage of 6-hydroxy-3-succinoylpyridine (HSP) by incorporation of oxygen at the 3-position to produce to 2,5-dihydroxypyridine (DHP) and succinic semialdehyde. The polypeptide is 6-hydroxy-3-succinoylpyridine 3-monooxygenase HspB (Pseudomonas putida (strain DSM 28022 / S16)).